The following is a 473-amino-acid chain: Arginine biosynthesis bifunctional protein ArgJ, mitochondrial (473 aa).

T201, K230, T241, E328, N468, and T473 together coordinate substrate. The Nucleophile role is filled by T241.

It belongs to the ArgJ family. As to quaternary structure, heterodimer of an alpha and a beta chain. Post-translationally, the alpha and beta chains are autoproteolytically processed from a single precursor protein within the mitochondrion.

Its subcellular location is the mitochondrion matrix. It catalyses the reaction N(2)-acetyl-L-ornithine + L-glutamate = N-acetyl-L-glutamate + L-ornithine. The catalysed reaction is L-glutamate + acetyl-CoA = N-acetyl-L-glutamate + CoA + H(+). Its pathway is amino-acid biosynthesis; L-arginine biosynthesis; L-ornithine and N-acetyl-L-glutamate from L-glutamate and N(2)-acetyl-L-ornithine (cyclic): step 1/1. It functions in the pathway amino-acid biosynthesis; L-arginine biosynthesis; N(2)-acetyl-L-ornithine from L-glutamate: step 1/4. Its function is as follows. Catalyzes two activities which are involved in the cyclic version of arginine biosynthesis: the synthesis of acetylglutamate from glutamate and acetyl-CoA, and of ornithine by transacetylation between acetylornithine and glutamate. This is Arginine biosynthesis bifunctional protein ArgJ, mitochondrial from Ajellomyces capsulatus (strain G186AR / H82 / ATCC MYA-2454 / RMSCC 2432) (Darling's disease fungus).